Here is a 192-residue protein sequence, read N- to C-terminus: Imidazoleglycerol-phosphate dehydratase (192 aa).

Belongs to the imidazoleglycerol-phosphate dehydratase family.

Its subcellular location is the cytoplasm. It catalyses the reaction D-erythro-1-(imidazol-4-yl)glycerol 3-phosphate = 3-(imidazol-4-yl)-2-oxopropyl phosphate + H2O. It participates in amino-acid biosynthesis; L-histidine biosynthesis; L-histidine from 5-phospho-alpha-D-ribose 1-diphosphate: step 6/9. The protein is Imidazoleglycerol-phosphate dehydratase of Methanocella arvoryzae (strain DSM 22066 / NBRC 105507 / MRE50).